The primary structure comprises 607 residues: F-box protein At-B (607 aa).

One can recognise an F-box domain in the interval 9–47 (LAEEILKRLDLENLCSVACVSTTLRSAVVSGVLPSLTSL). LRR repeat units follow at residues 51 to 76 (VFSP…TLNC), 77 to 99 (LRLN…HLLR), 100 to 125 (CSLL…TLEM), 130 to 155 (SPDV…QLNI), 228 to 253 (LDLI…DLED), 262 to 286 (DNDL…SLVR), 295 to 320 (FKRI…RLGG), 321 to 346 (FPKV…EVRG), 347 to 372 (AFLL…RLST), 373 to 397 (CPLI…DLGS), 398 to 422 (CKSI…NLAG), 424 to 447 (DVTD…SLRG), 448 to 477 (CRRV…DLGH), 478 to 503 (MPGI…SIRS), 504 to 536 (CFHV…NVHN), and 537 to 563 (CVSL…GMGQ).

In Arabidopsis thaliana (Mouse-ear cress), this protein is F-box protein At-B (ATB).